A 156-amino-acid chain; its full sequence is Ribosomal RNA large subunit methyltransferase H (156 aa).

Residues Leu73, Gly104, and 123–128 each bind S-adenosyl-L-methionine; that span reads LSPLTL.

This sequence belongs to the RNA methyltransferase RlmH family. Homodimer.

It is found in the cytoplasm. The enzyme catalyses pseudouridine(1915) in 23S rRNA + S-adenosyl-L-methionine = N(3)-methylpseudouridine(1915) in 23S rRNA + S-adenosyl-L-homocysteine + H(+). In terms of biological role, specifically methylates the pseudouridine at position 1915 (m3Psi1915) in 23S rRNA. This chain is Ribosomal RNA large subunit methyltransferase H, found in Yersinia enterocolitica serotype O:8 / biotype 1B (strain NCTC 13174 / 8081).